The sequence spans 214 residues: tRNA (guanine-N(7)-)-methyltransferase (214 aa).

Positions 43, 68, 99, and 121 each coordinate S-adenosyl-L-methionine. Aspartate 121 is a catalytic residue. Residues lysine 125, aspartate 157, and 194–197 contribute to the substrate site; that span reads TEYE.

Belongs to the class I-like SAM-binding methyltransferase superfamily. TrmB family.

The enzyme catalyses guanosine(46) in tRNA + S-adenosyl-L-methionine = N(7)-methylguanosine(46) in tRNA + S-adenosyl-L-homocysteine. The protein operates within tRNA modification; N(7)-methylguanine-tRNA biosynthesis. Its function is as follows. Catalyzes the formation of N(7)-methylguanine at position 46 (m7G46) in tRNA. This Alkaliphilus metalliredigens (strain QYMF) protein is tRNA (guanine-N(7)-)-methyltransferase.